Here is a 739-residue protein sequence, read N- to C-terminus: Thiamine biosynthesis multifunctional protein ThiED (739 aa).

The interval 1–210 (MTDFSLYLVT…PSPAEAAREL (210 aa)) is thiamine-phosphate synthase. 4-amino-2-methyl-5-(diphosphooxymethyl)pyrimidine-binding positions include 37 to 41 (QLRDK) and asparagine 69. Aspartate 70 and aspartate 88 together coordinate Mg(2+). A 4-amino-2-methyl-5-(diphosphooxymethyl)pyrimidine-binding site is contributed by threonine 107. 140–142 (TDT) is a binding site for 2-[(2R,5Z)-2-carboxy-4-methylthiazol-5(2H)-ylidene]ethyl phosphate. Position 143 (lysine 143) interacts with 4-amino-2-methyl-5-(diphosphooxymethyl)pyrimidine. 2-[(2R,5Z)-2-carboxy-4-methylthiazol-5(2H)-ylidene]ethyl phosphate-binding positions include glycine 174 and 194–195 (VS). A hydroxymethylpyrimidine/phosphomethylpyrimidine kinase region spans residues 226–481 (LTIAGTDPTG…GSGSGPVDHF (256 aa)). A 4-amino-5-hydroxymethyl-2-methylpyrimidine-binding site is contributed by glutamine 263. The thiaminase-2 stretch occupies residues 527–739 (YTRALWEATG…FDQATRQGWN (213 aa)).

In the N-terminal section; belongs to the thiamine-phosphate synthase family. The protein in the central section; belongs to the ThiD family. This sequence in the C-terminal section; belongs to the thiaminase-2 family. The cofactor is Mg(2+).

The enzyme catalyses 2-[(2R,5Z)-2-carboxy-4-methylthiazol-5(2H)-ylidene]ethyl phosphate + 4-amino-2-methyl-5-(diphosphooxymethyl)pyrimidine + 2 H(+) = thiamine phosphate + CO2 + diphosphate. It catalyses the reaction 2-(2-carboxy-4-methylthiazol-5-yl)ethyl phosphate + 4-amino-2-methyl-5-(diphosphooxymethyl)pyrimidine + 2 H(+) = thiamine phosphate + CO2 + diphosphate. It carries out the reaction 4-methyl-5-(2-phosphooxyethyl)-thiazole + 4-amino-2-methyl-5-(diphosphooxymethyl)pyrimidine + H(+) = thiamine phosphate + diphosphate. The catalysed reaction is 4-amino-5-hydroxymethyl-2-methylpyrimidine + ATP = 4-amino-2-methyl-5-(phosphooxymethyl)pyrimidine + ADP + H(+). The enzyme catalyses 4-amino-2-methyl-5-(phosphooxymethyl)pyrimidine + ATP = 4-amino-2-methyl-5-(diphosphooxymethyl)pyrimidine + ADP. It participates in cofactor biosynthesis; thiamine diphosphate biosynthesis; 4-amino-2-methyl-5-diphosphomethylpyrimidine from 5-amino-1-(5-phospho-D-ribosyl)imidazole: step 3/3. The protein operates within cofactor biosynthesis; thiamine diphosphate biosynthesis; thiamine phosphate from 4-amino-2-methyl-5-diphosphomethylpyrimidine and 4-methyl-5-(2-phosphoethyl)-thiazole: step 1/1. In terms of biological role, condenses 4-methyl-5-(beta-hydroxyethyl)thiazole monophosphate (THZ-P) and 2-methyl-4-amino-5-hydroxymethyl pyrimidine pyrophosphate (HMP-PP) to form thiamine monophosphate (TMP). Catalyzes the phosphorylation of hydroxymethylpyrimidine phosphate (HMP-P) to HMP-PP, and of HMP to HMP-P. This is Thiamine biosynthesis multifunctional protein ThiED (thiED) from Corynebacterium efficiens (strain DSM 44549 / YS-314 / AJ 12310 / JCM 11189 / NBRC 100395).